The primary structure comprises 258 residues: Small ribosomal subunit protein uS3 (258 aa).

Residues 43 to 111 (IRKLMSTGLE…QVQLNILEVK (69 aa)) enclose the KH type-2 domain. The tract at residues 217–258 (AREQASAAPRARGRADRPRGRRDEGAAPQQAAAPAATTGTEA) is disordered. Basic and acidic residues predominate over residues 229 to 241 (GRADRPRGRRDEG). Residues 242-258 (AAPQQAAAPAATTGTEA) are compositionally biased toward low complexity.

It belongs to the universal ribosomal protein uS3 family. As to quaternary structure, part of the 30S ribosomal subunit. Forms a tight complex with proteins S10 and S14.

Functionally, binds the lower part of the 30S subunit head. Binds mRNA in the 70S ribosome, positioning it for translation. This is Small ribosomal subunit protein uS3 from Beutenbergia cavernae (strain ATCC BAA-8 / DSM 12333 / CCUG 43141 / JCM 11478 / NBRC 16432 / NCIMB 13614 / HKI 0122).